Here is an 884-residue protein sequence, read N- to C-terminus: Coatomer subunit gamma-1 (884 aa).

5 HEAT repeats span residues 65–100 (VEAT…SPSS), 101–138 (DEVI…GTLL), 286–323 (RELA…TRPL), 325–357 (VTNC…TGNE), and 358–395 (SSVD…KFPL). The segment at 592 to 612 (QPLQEKKAPGKKPPAGAPAPA) is disordered. Over residues 602–612 (KKPPAGAPAPA) the composition is skewed to pro residues.

It belongs to the COPG family. In terms of assembly, oligomeric complex that consists of at least the alpha, beta, beta', gamma, delta, epsilon and zeta subunits.

Its subcellular location is the cytoplasm. The protein localises to the golgi apparatus membrane. The protein resides in the cytoplasmic vesicle. It is found in the COPI-coated vesicle membrane. The coatomer is a cytosolic protein complex that binds to dilysine motifs and reversibly associates with Golgi non-clathrin-coated vesicles, which further mediate biosynthetic protein transport from the ER, via the Golgi up to the trans Golgi network. Coatomer complex is required for budding from Golgi membranes, and is essential for the retrograde Golgi-to-ER transport of dilysine-tagged proteins. This chain is Coatomer subunit gamma-1, found in Oryza sativa subsp. japonica (Rice).